Reading from the N-terminus, the 285-residue chain is Glutamate racemase (285 aa).

Substrate-binding positions include 30 to 31 (DS) and 62 to 63 (YG). Residue C94 is the Proton donor/acceptor of the active site. 95-96 (NT) serves as a coordination point for substrate. C206 (proton donor/acceptor) is an active-site residue. 207–208 (TH) is a binding site for substrate.

It belongs to the aspartate/glutamate racemases family.

The catalysed reaction is L-glutamate = D-glutamate. It participates in cell wall biogenesis; peptidoglycan biosynthesis. Its function is as follows. Provides the (R)-glutamate required for cell wall biosynthesis. The sequence is that of Glutamate racemase from Pectobacterium atrosepticum (strain SCRI 1043 / ATCC BAA-672) (Erwinia carotovora subsp. atroseptica).